Here is a 201-residue protein sequence, read N- to C-terminus: MAVYKVSFLAHLLVLGMYLLVSTVEHANACTKECGNLGYGICPGSEGSPENPICTNCCSGYKGCNYYYANGTFICEGTSDPKNPNICPSYCDPQIAYSKCPRSEGKTIIYPTGCTTCCTGYKGCYYFGQDGEFVCEGESIEPKGCTKECDPRVAYMTCPSSGLAKLNQVCVNCCSAGEGCKLYDNDGSLLCTGEPQSISTA.

The signal sequence occupies residues 1–23; it reads MAVYKVSFLAHLLVLGMYLLVST. A run of 3 repeats spans residues 27–83, 84–143, and 144–199. Intrachain disulfides connect cysteine 30/cysteine 118, cysteine 34/cysteine 114, cysteine 42/cysteine 124, cysteine 54/cysteine 91, cysteine 57/cysteine 75, cysteine 58/cysteine 87, cysteine 64/cysteine 100, and cysteine 117/cysteine 135.

It belongs to the protease inhibitor I20 (potato type II proteinase inhibitor) family.

The polypeptide is Proteinase inhibitor type-2 CEVI57 (CEVI57) (Solanum lycopersicum (Tomato)).